The sequence spans 189 residues: Autophagy receptor ATG45 (189 aa).

The segment at 1–96 (MSNFLLVIPE…TNNILHFKDN (96 aa)) is binds glycogen. A required for sequestration into autophagosomes region spans residues 97 to 189 (EASQLMDIPL…AKKVKTYWNK (93 aa)). Residue S107 is modified to Phosphoserine. The ATG8 interaction motif (AIM) signature appears at 127 to 130 (YVNL). Phosphoserine is present on S172. Residues 176 to 187 (LMCIAKKVKTYW) are may facilitate interactions with the autophagosome membrane.

Interacts with ATG8.

Its subcellular location is the cytoplasm. The protein resides in the cytosol. It localises to the cytoplasmic vesicle. The protein localises to the autophagosome. In terms of biological role, autophagy receptor for glycogen that facilitates the sequestration of glycogen assemblies into autophagosomes as part of bulk autophagy; the autophagy of glycogen (glycophagy) is stimulated during prolonged nitrogen starvation and during sporulation. This is Autophagy receptor ATG45 from Saccharomyces cerevisiae (strain ATCC 204508 / S288c) (Baker's yeast).